Here is a 54-residue protein sequence, read N- to C-terminus: MQELVTLECTEARKEGKPVSRYLTTRNKKTVTERIEKKKYNPHLKRHTLHKEIK.

It belongs to the bacterial ribosomal protein bL33 family.

This Opitutus terrae (strain DSM 11246 / JCM 15787 / PB90-1) protein is Large ribosomal subunit protein bL33.